Reading from the N-terminus, the 447-residue chain is UDP-N-acetylmuramoylalanine--D-glutamate ligase (447 aa).

112–118 (GTNGKST) lines the ATP pocket.

Belongs to the MurCDEF family.

It localises to the cytoplasm. It catalyses the reaction UDP-N-acetyl-alpha-D-muramoyl-L-alanine + D-glutamate + ATP = UDP-N-acetyl-alpha-D-muramoyl-L-alanyl-D-glutamate + ADP + phosphate + H(+). Its pathway is cell wall biogenesis; peptidoglycan biosynthesis. Cell wall formation. Catalyzes the addition of glutamate to the nucleotide precursor UDP-N-acetylmuramoyl-L-alanine (UMA). In Legionella pneumophila subsp. pneumophila (strain Philadelphia 1 / ATCC 33152 / DSM 7513), this protein is UDP-N-acetylmuramoylalanine--D-glutamate ligase.